The primary structure comprises 476 residues: Scopoletin glucosyltransferase (476 aa).

The active-site Proton acceptor is H16. An anthocyanidin is bound at residue H16. The active-site Charge relay is the D119. UDP-alpha-D-glucose-binding residues include A343, Q345, H360, W363, N364, S365, and E368. A383 is a binding site for an anthocyanidin. E384 and Q385 together coordinate UDP-alpha-D-glucose.

Belongs to the UDP-glycosyltransferase family.

The enzyme catalyses scopoletin + UDP-alpha-D-glucose = scopolin + UDP + H(+). In terms of biological role, glucosyltransferase acting preferentially on aromatic substrates of the phenylpropanoid types. The best substrates are scopoletin and esculetin. Required for full resistance to virus. This chain is Scopoletin glucosyltransferase (TOGT1), found in Nicotiana tabacum (Common tobacco).